We begin with the raw amino-acid sequence, 214 residues long: Large ribosomal subunit protein uL3 (214 aa).

Q151 is modified (N5-methylglutamine).

This sequence belongs to the universal ribosomal protein uL3 family. In terms of assembly, part of the 50S ribosomal subunit. Forms a cluster with proteins L14 and L19. In terms of processing, methylated by PrmB.

Its function is as follows. One of the primary rRNA binding proteins, it binds directly near the 3'-end of the 23S rRNA, where it nucleates assembly of the 50S subunit. The chain is Large ribosomal subunit protein uL3 from Magnetococcus marinus (strain ATCC BAA-1437 / JCM 17883 / MC-1).